A 621-amino-acid polypeptide reads, in one-letter code: Zinc metalloproteinase-disintegrin-like TSV-DM (621 aa).

The N-terminal stretch at 1–20 (MIQVLLVTICLAVFPYQGSS) is a signal peptide. A propeptide spanning residues 21–191 (IILESGNVND…EASQSNLTPE (171 aa)) is cleaved from the precursor. Gln192 is subject to Pyrrolidone carboxylic acid. In terms of domain architecture, Peptidase M12B spans 200–396 (KYVKFFLVAD…NMPQCILKKP (197 aa)). N-linked (GlcNAc...) asparagine glycosylation is present at Asn219. Disulfide bonds link Cys311-Cys391, Cys351-Cys375, and Cys353-Cys358. Residue His336 participates in Zn(2+) binding. Residue Glu337 is part of the active site. Zn(2+) contacts are provided by His340 and His346. One can recognise a Disintegrin domain in the interval 404–489 (PPVCGNYFVE…AECTDRFQRN (86 aa)). 6 residues coordinate Ca(2+): Val406, Asn409, Phe411, Glu413, Glu416, and Asp419. 14 disulfides stabilise this stretch: Cys407–Cys436, Cys418–Cys431, Cys420–Cys426, Cys430–Cys453, Cys444–Cys450, Cys449–Cys475, Cys462–Cys482, Cys469–Cys500, Cys493–Cys505, Cys512–Cys562, Cys527–Cys573, Cys540–Cys550, Cys557–Cys599, and Cys593–Cys605. Positions 468-470 (ECD) match the D/ECD-tripeptide motif. Ca(2+)-binding residues include Asp470, Met471, Asp473, Asp484, and Arg485. Asn502 carries an N-linked (GlcNAc...) asparagine glycan.

It belongs to the venom metalloproteinase (M12B) family. P-III subfamily. P-IIIc sub-subfamily. As to quaternary structure, homodimer; disulfide-linked. Zn(2+) is required as a cofactor. In terms of processing, the N-terminus is blocked. In terms of tissue distribution, expressed by the venom gland.

It localises to the secreted. Its activity is regulated as follows. Inhibited by EDTA and DTT, and partially inhibited by EGTA, but not inhibited by PMSF and NEM. Functionally, snake venom zinc metalloprotease that hydrolyzes the alpha-chain (FGA) and more slowly the beta-chain (FGB) of fibrinogen. Inhibits cell proliferation and induces cell morphologic changes transiently on human umbilical vein endothelial cells. This Trimeresurus stejnegeri (Chinese green tree viper) protein is Zinc metalloproteinase-disintegrin-like TSV-DM.